Reading from the N-terminus, the 90-residue chain is Protein LURE 1.2 (90 aa).

The first 19 residues, 1-19 (MKLPIIFLTLLIFVSSCTS), serve as a signal peptide directing secretion. N-linked (GlcNAc...) asparagine glycosylation is present at N23. 3 disulfide bridges follow: C58–C75, C61–C82, and C65–C84. The PRK6 binding stretch occupies residues 67 to 87 (RRGKYIRTCSFERKLCRCSIS).

This sequence belongs to the DEFL family. Interacts with MDIS1, MIK1, MIK2 and TDR/PXY, but not with MDIS2. Binds to PRK6 LRRs. As to expression, expressed in the pistil. Detected exclusively in the synergid cells.

Its subcellular location is the secreted. Its function is as follows. Pollen tube attractants guiding pollen tubes to the ovular micropyle. Attracts specifically pollen tubes from A.thaliana, but not those from A.lyrata. Triggers endocytosis of MDIS1 in the pollen tube tip. This Arabidopsis thaliana (Mouse-ear cress) protein is Protein LURE 1.2.